Reading from the N-terminus, the 109-residue chain is Large ribosomal subunit protein uL22 (109 aa).

This sequence belongs to the universal ribosomal protein uL22 family. As to quaternary structure, part of the 50S ribosomal subunit.

This protein binds specifically to 23S rRNA; its binding is stimulated by other ribosomal proteins, e.g. L4, L17, and L20. It is important during the early stages of 50S assembly. It makes multiple contacts with different domains of the 23S rRNA in the assembled 50S subunit and ribosome. In terms of biological role, the globular domain of the protein is located near the polypeptide exit tunnel on the outside of the subunit, while an extended beta-hairpin is found that lines the wall of the exit tunnel in the center of the 70S ribosome. This is Large ribosomal subunit protein uL22 from Polynucleobacter asymbioticus (strain DSM 18221 / CIP 109841 / QLW-P1DMWA-1) (Polynucleobacter necessarius subsp. asymbioticus).